The primary structure comprises 475 residues: Phosphoethanolamine N-methyltransferase 1 (475 aa).

Belongs to the class I-like SAM-binding methyltransferase superfamily.

It carries out the reaction phosphoethanolamine + S-adenosyl-L-methionine = N-methylethanolamine phosphate + S-adenosyl-L-homocysteine + H(+). It functions in the pathway phospholipid metabolism; phosphatidylcholine biosynthesis; phosphocholine from phosphoethanolamine. With respect to regulation, feedback inhibition by phosphatidylcholine. Functionally, catalyzes the first step in the synthesis of phosphocholine by converting phosphoethanolamine into phospho-monomethylethanolamine (N-methylethanolamine phosphate). Phosphocholine is a precursor for phosphatidylcholine, a major component in membranes and a precursor itself in the production of glycoconjugates secreted by parasitic nematodes to avoid host immune responses. This chain is Phosphoethanolamine N-methyltransferase 1, found in Caenorhabditis elegans.